The primary structure comprises 363 residues: 3-isopropylmalate dehydrogenase (363 aa).

78–91 (GPKWEHLPPAEQPE) contacts NAD(+). 4 residues coordinate substrate: Arg99, Arg109, Arg138, and Asp227. Residues Asp227, Asp251, and Asp255 each contribute to the Mg(2+) site. 285–297 (GSAPDIAGKDIAN) contributes to the NAD(+) binding site.

The protein belongs to the isocitrate and isopropylmalate dehydrogenases family. LeuB type 1 subfamily. Homodimer. Mg(2+) serves as cofactor. Requires Mn(2+) as cofactor.

It is found in the cytoplasm. The catalysed reaction is (2R,3S)-3-isopropylmalate + NAD(+) = 4-methyl-2-oxopentanoate + CO2 + NADH. It functions in the pathway amino-acid biosynthesis; L-leucine biosynthesis; L-leucine from 3-methyl-2-oxobutanoate: step 3/4. Its function is as follows. Catalyzes the oxidation of 3-carboxy-2-hydroxy-4-methylpentanoate (3-isopropylmalate) to 3-carboxy-4-methyl-2-oxopentanoate. The product decarboxylates to 4-methyl-2 oxopentanoate. The protein is 3-isopropylmalate dehydrogenase of Pectobacterium atrosepticum (strain SCRI 1043 / ATCC BAA-672) (Erwinia carotovora subsp. atroseptica).